Consider the following 399-residue polypeptide: Glucose-1-phosphate adenylyltransferase (399 aa).

Residues Gly-158, 174–175 (EK), and Ser-192 each bind alpha-D-glucose 1-phosphate.

It belongs to the bacterial/plant glucose-1-phosphate adenylyltransferase family. In terms of assembly, homotetramer.

The catalysed reaction is alpha-D-glucose 1-phosphate + ATP + H(+) = ADP-alpha-D-glucose + diphosphate. Its pathway is glycan biosynthesis; glycogen biosynthesis. Involved in the biosynthesis of ADP-glucose, a building block required for the elongation reactions to produce glycogen. Catalyzes the reaction between ATP and alpha-D-glucose 1-phosphate (G1P) to produce pyrophosphate and ADP-Glc. This chain is Glucose-1-phosphate adenylyltransferase, found in Streptomyces coelicolor (strain ATCC BAA-471 / A3(2) / M145).